A 300-amino-acid polypeptide reads, in one-letter code: ETS homologous factor (300 aa).

A PNT domain is found at 29-115 (PTCNVSSGFF…SNLQHLKWNG (87 aa)). Positions 181–203 (VAESPDMKKEQDHPVKSHTKKHN) are disordered. The span at 185 to 195 (PDMKKEQDHPV) shows a compositional bias: basic and acidic residues. A DNA-binding region (ETS) is located at residues 207–289 (THLWEFIRDI…DGRRLVYKFG (83 aa)).

This sequence belongs to the ETS family. Highly expressed in kidney and lung, weakly in skeletal muscle, heart, and liver, and not detected in brain, spleen or testis.

The protein resides in the nucleus. Transcriptional activator that may play a role in regulating epithelial cell differentiation and proliferation. May act as a repressor for a specific subset of ETS/AP-1-responsive genes, and as a modulator of the nuclear response to mitogen-activated protein kinase signaling cascades. Binds to DNA sequences containing the consensus nucleotide core sequence GGAA. Involved in regulation of TNFRSF10B/DR5 expression through Ets-binding sequences on the TNFRSF10B/DR5 promoter. The chain is ETS homologous factor from Mus musculus (Mouse).